A 325-amino-acid polypeptide reads, in one-letter code: Dehydrogenase/reductase SDR family member 7B (325 aa).

The Cytoplasmic portion of the chain corresponds to 1–17; the sequence is MVSAATRKSLLRARVMD. The chain crosses the membrane as a helical; Signal-anchor for type II membrane protein span at residues 18–38; the sequence is FITSTAILPLLLGCVGLFSLF. Over 39-325 the chain is Lumenal; it reads KLLQWLRMRA…ARKERKSKHS (287 aa). Residues Ser62 and Leu64 each coordinate NAD(+). Ser194 provides a ligand contact to substrate. Positions 207, 211, and 242 each coordinate NAD(+). The active-site Proton acceptor is the Tyr207.

The protein belongs to the short-chain dehydrogenases/reductases (SDR) family.

The protein localises to the endoplasmic reticulum membrane. Putative oxidoreductase. The polypeptide is Dehydrogenase/reductase SDR family member 7B (DHRS7B) (Bos taurus (Bovine)).